Consider the following 431-residue polypeptide: Hydroxylamine reductase (431 aa).

Cys5, Cys8, Cys17, and Cys23 together coordinate [4Fe-4S] cluster. Residues His131, Glu155, Cys199, Cys286, Cys314, Cys339, Glu373, and Lys375 each coordinate hybrid [4Fe-2O-2S] cluster. Cys286 carries the post-translational modification Cysteine persulfide.

The protein belongs to the HCP family. It depends on [4Fe-4S] cluster as a cofactor. The cofactor is hybrid [4Fe-2O-2S] cluster.

Its subcellular location is the cytoplasm. The enzyme catalyses A + NH4(+) + H2O = hydroxylamine + AH2 + H(+). In terms of biological role, catalyzes the reduction of hydroxylamine to form NH(3) and H(2)O. In Thermotoga petrophila (strain ATCC BAA-488 / DSM 13995 / JCM 10881 / RKU-1), this protein is Hydroxylamine reductase.